Reading from the N-terminus, the 504-residue chain is MEFKQPNRPSYCTWELNATNSPHTCRTKNGDYTKIMPDILTAIGQTPLIKLNNIPKSYGIKCEIYAKCEFLNPGGSVKDRIAYRMIQDAEDKGLLKPGCTIIEPTSGNTGIGLAMAAAVRGYKCIIVMPEKMSDEKISTLYALGAKIIRTPTEASWHSPEAHISVAQKLQKEIPNSIILDQYTNPGNPLAHYDQTAIEIWKQCEGKIDYLVAGAGTGGTISGIGRKLKELSPNIKIIAVDPKGSILDPSSDSQNEVGFYEVEGIGYDFIPTVLDRNVIDKWIKTEDNESLNAARMLIRQEGLLCGGSSGAALIAALKIAKDIPEEKRMVIILPDGIRNYLTKFVSEYWMETRGFLQPVCQNEMNKWWWNMKISNLSFDKQSLLKENTVTCQEAMHMLKNADSQLLVISDDNIHIKGVISLNKLTSYVISGIVKCTDFVDKAMVKQYVKVKHSATLGYISRVLEKEPYVIILDDEHDDAFIGIVNQFHILQFITKNGTSNNYLIN.

Residues C12 and H23 each coordinate heme. Position 78 is an N6-(pyridoxal phosphate)lysine (K78). Pyridoxal 5'-phosphate-binding positions include N108, 215–219 (GTGGT), and S307. 2 consecutive CBS domains span residues 375–434 (LSFD…IVKC) and 442–498 (MVKQ…NGTS).

The protein belongs to the cysteine synthase/cystathionine beta-synthase family. Homodimer. It depends on pyridoxal 5'-phosphate as a cofactor.

It catalyses the reaction L-homocysteine + L-serine = L,L-cystathionine + H2O. Its pathway is amino-acid biosynthesis; L-cysteine biosynthesis; L-cysteine from L-homocysteine and L-serine: step 1/2. Its activity is regulated as follows. Has no response to S-adenosyl-methionine/AdoMet, unlike mammalian orthologs. Binds non-covalently to a heme group that may control the redox sensitivity of the enzyme. Functionally, hydro-lyase catalyzing the first step of the transsulfuration pathway, where the hydroxyl group of L-serine is displaced by L-homocysteine in a beta-replacement reaction to form L-cystathionine, the precursor of L-cysteine. This Apis mellifera (Honeybee) protein is Cystathionine beta-synthase.